We begin with the raw amino-acid sequence, 567 residues long: Phenylalanine ammonia-lyase (567 aa).

Tyr-78 acts as the Proton donor/acceptor in catalysis. The segment at residues 167–169 (ASG) is a cross-link (5-imidazolinone (Ala-Gly)). At Ser-168 the chain carries 2,3-didehydroalanine (Ser). (E)-cinnamate is bound by residues Asn-223, Gln-311, Arg-317, Asn-347, Lys-419, Glu-448, and Asn-451.

Belongs to the PAL/histidase family. As to quaternary structure, homotetramer. In terms of processing, contains an active site 4-methylidene-imidazol-5-one (MIO), which is formed autocatalytically by cyclization and dehydration of residues Ala-Ser-Gly.

Its subcellular location is the cytoplasm. The enzyme catalyses L-phenylalanine = (E)-cinnamate + NH4(+). Its pathway is phenylpropanoid metabolism; trans-cinnamate biosynthesis; trans-cinnamate from L-phenylalanine: step 1/1. Catalyzes the non-oxidative deamination of L-phenylalanine to form trans-cinnamic acid, the first step in the phenylpropanoid pathway. The protein is Phenylalanine ammonia-lyase of Trichormus variabilis (strain ATCC 29413 / PCC 7937) (Anabaena variabilis).